The sequence spans 765 residues: Multifunctional tryptophan biosynthesis protein (765 aa).

The region spanning 2–196 is the Glutamine amidotransferase type-1 domain; sequence ATLLIDNYDS…LSLRGGNWDE (195 aa). 53–55 contacts L-glutamine; it reads GPG. The active-site Nucleophile; for GATase activity is the cysteine 81. Residues glutamine 85 and 131–132 each bind L-glutamine; that span reads SL. Catalysis depends on for GATase activity residues histidine 170 and glutamate 172. Residues 231–494 form an indole-3-glycerol phosphate synthase region; the sequence is TILSRIYAQR…NLKEFVAELL (264 aa). The segment at 512–765 is N-(5'-phosphoribosyl)anthranilate isomerase; it reads QVKICGISSV…VEKAKSINLQ (254 aa).

It carries out the reaction N-(5-phospho-beta-D-ribosyl)anthranilate = 1-(2-carboxyphenylamino)-1-deoxy-D-ribulose 5-phosphate. The catalysed reaction is 1-(2-carboxyphenylamino)-1-deoxy-D-ribulose 5-phosphate + H(+) = (1S,2R)-1-C-(indol-3-yl)glycerol 3-phosphate + CO2 + H2O. It catalyses the reaction chorismate + L-glutamine = anthranilate + pyruvate + L-glutamate + H(+). It participates in amino-acid biosynthesis; L-tryptophan biosynthesis; L-tryptophan from chorismate: step 1/5. Its pathway is amino-acid biosynthesis; L-tryptophan biosynthesis; L-tryptophan from chorismate: step 3/5. The protein operates within amino-acid biosynthesis; L-tryptophan biosynthesis; L-tryptophan from chorismate: step 4/5. Functionally, trifunctional enzyme bearing the Gln amidotransferase (GATase) domain of anthranilate synthase, indole-glycerolphosphate synthase, and phosphoribosylanthranilate isomerase activities. In Phycomyces blakesleeanus, this protein is Multifunctional tryptophan biosynthesis protein (trp1).